The following is a 336-amino-acid chain: Ribose-phosphate pyrophosphokinase 1 (336 aa).

Mg(2+) contacts are provided by Asp-150, His-152, Asp-161, and Asp-165. A binding of phosphoribosylpyrophosphate region spans residues 236–251; sequence GKVAVMVDDMIDTAGT.

Belongs to the ribose-phosphate pyrophosphokinase family.

The enzyme catalyses D-ribose 5-phosphate + ATP = 5-phospho-alpha-D-ribose 1-diphosphate + AMP + H(+). This is Ribose-phosphate pyrophosphokinase 1 (PRS1) from Spinacia oleracea (Spinach).